The sequence spans 85 residues: MAHKKAGGSTRNGRDSESKRLGVKRFGGEAVLAGSIIVRQRGTKFHAGIDVGCGKDHTLFALKDGKVKFEVKGPKNRKFISIEAE.

Positions 1 to 20 are disordered; sequence MAHKKAGGSTRNGRDSESKR.

The protein belongs to the bacterial ribosomal protein bL27 family.

The sequence is that of Large ribosomal subunit protein bL27 from Yersinia enterocolitica serotype O:8 / biotype 1B (strain NCTC 13174 / 8081).